Reading from the N-terminus, the 186-residue chain is Ran guanine nucleotide release factor (186 aa).

Residues 27–70 are interaction with RAN; that stretch reads DLRPVPDNQEVFCHPVTDQSLIVELLELQAHVRGEAAARYHFED.

Belongs to the MOG1 family. In terms of assembly, monomer. Interacts with RAN, both RAN-GTP and RAN-GDP. Competes with RCC1 for a common binding site on RAN and thereby inhibits RCC1-mediated nucleotide exchange. Forms a complex with RAN-GTP and RANBP1. Interacts with the cytoplasmic loop 2 of SCN5A. In terms of tissue distribution, isoform 1 and isoform 2 are ubiquitously expressed. Detected in heart and brain.

It is found in the nucleus. The protein localises to the cytoplasm. Its subcellular location is the perinuclear region. The protein resides in the cell membrane. May regulate the intracellular trafficking of RAN. Promotes guanine nucleotide release from RAN and inhibits binding of new GTP by preventing the binding of the RAN guanine nucleotide exchange factor RCC1. Regulates the levels of GTP-bound RAN in the nucleus, and thereby plays a role in the regulation of RAN-dependent mitotic spindle dynamics. Enhances the expression of SCN5A at the cell membrane in cardiomyocytes. This Homo sapiens (Human) protein is Ran guanine nucleotide release factor (RANGRF).